The primary structure comprises 261 residues: Cytochrome c oxidase subunit 3 (261 aa).

The Mitochondrial matrix portion of the chain corresponds to Met1–Pro15. Residues Trp16 to Trp34 traverse the membrane as a helical segment. Over Phe35–Thr40 the chain is Mitochondrial intermembrane. Residues Ile41–Thr66 form a helical membrane-spanning segment. At Phe67–Thr72 the chain is on the mitochondrial matrix side. A helical membrane pass occupies residues Pro73–Ser105. The Mitochondrial intermembrane segment spans residues Leu106 to Glu128. Residues Val129–Met152 form a helical membrane-spanning segment. The Mitochondrial matrix portion of the chain corresponds to Glu153–Asn155. A helical membrane pass occupies residues Arg156–Glu183. At Ala184–Asp190 the chain is on the mitochondrial intermembrane side. Residues Gly191–Leu223 traverse the membrane as a helical segment. Topologically, residues Lys224 to His232 are mitochondrial matrix. Residues Phe233–Ile256 form a helical membrane-spanning segment. Topologically, residues Tyr257–Ser261 are mitochondrial intermembrane.

It belongs to the cytochrome c oxidase subunit 3 family. As to quaternary structure, component of the cytochrome c oxidase (complex IV, CIV), a multisubunit enzyme composed of 14 subunits. The complex is composed of a catalytic core of 3 subunits MT-CO1, MT-CO2 and MT-CO3, encoded in the mitochondrial DNA, and 11 supernumerary subunits COX4I, COX5A, COX5B, COX6A, COX6B, COX6C, COX7A, COX7B, COX7C, COX8 and NDUFA4, which are encoded in the nuclear genome. The complex exists as a monomer or a dimer and forms supercomplexes (SCs) in the inner mitochondrial membrane with NADH-ubiquinone oxidoreductase (complex I, CI) and ubiquinol-cytochrome c oxidoreductase (cytochrome b-c1 complex, complex III, CIII), resulting in different assemblies (supercomplex SCI(1)III(2)IV(1) and megacomplex MCI(2)III(2)IV(2)).

It is found in the mitochondrion inner membrane. It catalyses the reaction 4 Fe(II)-[cytochrome c] + O2 + 8 H(+)(in) = 4 Fe(III)-[cytochrome c] + 2 H2O + 4 H(+)(out). Component of the cytochrome c oxidase, the last enzyme in the mitochondrial electron transport chain which drives oxidative phosphorylation. The respiratory chain contains 3 multisubunit complexes succinate dehydrogenase (complex II, CII), ubiquinol-cytochrome c oxidoreductase (cytochrome b-c1 complex, complex III, CIII) and cytochrome c oxidase (complex IV, CIV), that cooperate to transfer electrons derived from NADH and succinate to molecular oxygen, creating an electrochemical gradient over the inner membrane that drives transmembrane transport and the ATP synthase. Cytochrome c oxidase is the component of the respiratory chain that catalyzes the reduction of oxygen to water. Electrons originating from reduced cytochrome c in the intermembrane space (IMS) are transferred via the dinuclear copper A center (CU(A)) of subunit 2 and heme A of subunit 1 to the active site in subunit 1, a binuclear center (BNC) formed by heme A3 and copper B (CU(B)). The BNC reduces molecular oxygen to 2 water molecules using 4 electrons from cytochrome c in the IMS and 4 protons from the mitochondrial matrix. This Eudorcas thomsonii (Thomson's gazelle) protein is Cytochrome c oxidase subunit 3 (MT-CO3).